A 103-amino-acid polypeptide reads, in one-letter code: MSHEPEYRDWQQIVELIRSSVDSQQHEMLLTMLMTPDERESLTARVNILNELLKGELSQRQISQMLGVGIATITRGSNELKSKSEAEKDKLKLLLEQVAQVAK.

The DNA-binding element occupies 59 to 82 (QRQISQMLGVGIATITRGSNELKS).

The protein belongs to the TrpR family. In terms of assembly, homodimer.

It localises to the cytoplasm. Functionally, this protein is an aporepressor. When complexed with L-tryptophan it binds the operator region of the trp operon and prevents the initiation of transcription. This Vibrio parahaemolyticus serotype O3:K6 (strain RIMD 2210633) protein is Trp operon repressor homolog.